We begin with the raw amino-acid sequence, 445 residues long: MATIHKLFKSPFFDFEFLRLLAMAPYEGAEIGEVLEAAAKIKDQDPESWYSTLLETGGKAEAIAKQAEASGDRVGARRAYLRSSNYLRAAQFMLNEGPIGHDERVLPTLERAIANFRKGVQYRDGKTIFLEIPYEGGKTLPGYLYLPPAARRIPGRKIPILLNSGGGDSTQEEIYFVNPAYGPDLGYAVLTFEGPGQGIVLRRDKLPMRPDWESVTGPVLDHLFDLATRHPELELDLDHIAVTGASMGGYFALRAAADPRIKACVSVDGFYSLSSFVGGRMPGPLFNGFMSGWLSDWMFNGILGVLKKLAFQARWEFNHLRWATGSTTDADVMRSFGAYTLQKADGTEYLADVKCPTLVTGAGASFYFDPATTTDKIYDCLTSLQDGVDKEKWIATDVAYGGLQAKIGAFGYSAQKTFEWLDQRFGIQREPLAASSRLEDLVSRL.

The Nucleophile role is filled by serine 246.

The protein belongs to the AB hydrolase superfamily. FUS2 hydrolase family. Homodimer.

It participates in secondary metabolite biosynthesis. Its function is as follows. Alpha/beta hydrolase; part of the gene cluster that mediates the biosynthesis of pseurotin A, a competitive inhibitor of chitin synthase and an inducer of nerve-cell proliferation. The PKS-NRPS hybrid synthetase psoA is responsible for the biosynthesis of azaspirene, one of the first intermediates having the 1-oxa-7-azaspiro[4,4]-non-2-ene-4,6-dione core of pseurotin, via condensation of one acetyl-CoA, 4 malonyl-CoA, and a L-phenylalanine molecule. The dual-functional monooxygenase/methyltransferase psoF seems to be involved in the addition of the C3 methyl group onto the pseurotin scaffold. Azaspirene is then converted to synerazol through 4 steps including oxidation of C17 by the cytochrome P450 monooxygenase psoD, O-methylation of the hydroxy group of C8 by the methyltransferase psoC, and the trans-to-cis isomerization of the C13 olefin by the glutathione S-transferase psoE. The fourth step of synerazol production is performed by the dual-functional monooxygenase/methyltransferase psoF which seems to catalyze the epoxidation of the intermediate deepoxy-synerazol. Synerazol can be attacked by a water molecule nonenzymatically at two different positions to yield two diol products, pseurotin A and pseurotin D. The sequence is that of Alpha/beta hydrolase psoB from Aspergillus fumigatus (strain ATCC MYA-4609 / CBS 101355 / FGSC A1100 / Af293) (Neosartorya fumigata).